A 365-amino-acid polypeptide reads, in one-letter code: Mitogen-activated protein kinase HOG1A (365 aa).

The region spanning 24–303 (YTDLQPVGMG…AADALAHPYL (280 aa)) is the Protein kinase domain. Residues 30-38 (VGMGAFGLL) and K53 contribute to the ATP site. Catalysis depends on D145, which acts as the Proton acceptor. T175 carries the post-translational modification Phosphothreonine. The short motif at 175–177 (TGY) is the TXY element. Y177 carries the phosphotyrosine modification.

The protein belongs to the protein kinase superfamily. Ser/Thr protein kinase family. MAP kinase subfamily. HOG1 sub-subfamily. Mg(2+) is required as a cofactor. Phosphorylated. Dually phosphorylated on Thr-175 and Tyr-177, which activates the enzyme. Rapidly dephosphorylated upon either hypo- or hyperosmotic shock.

Its subcellular location is the cytoplasm. It is found in the nucleus. The enzyme catalyses L-seryl-[protein] + ATP = O-phospho-L-seryl-[protein] + ADP + H(+). It carries out the reaction L-threonyl-[protein] + ATP = O-phospho-L-threonyl-[protein] + ADP + H(+). Activated by tyrosine and threonine phosphorylation. In terms of biological role, proline-directed serine/threonine-protein kinase involved in a signal transduction pathway that is activated by changes in the osmolarity of the extracellular environment. Controls osmotic regulation of transcription of target genes. The polypeptide is Mitogen-activated protein kinase HOG1A (HOG1A) (Wallemia ichthyophaga (strain EXF-994 / CBS 113033)).